A 316-amino-acid chain; its full sequence is Porphobilinogen deaminase (316 aa).

The residue at position 245 (C245) is an S-(dipyrrolylmethanemethyl)cysteine.

This sequence belongs to the HMBS family. In terms of assembly, monomer. Dipyrromethane is required as a cofactor.

The enzyme catalyses 4 porphobilinogen + H2O = hydroxymethylbilane + 4 NH4(+). The protein operates within porphyrin-containing compound metabolism; protoporphyrin-IX biosynthesis; coproporphyrinogen-III from 5-aminolevulinate: step 2/4. It participates in porphyrin-containing compound metabolism; chlorophyll biosynthesis. Functionally, tetrapolymerization of the monopyrrole PBG into the hydroxymethylbilane pre-uroporphyrinogen in several discrete steps. This is Porphobilinogen deaminase from Prochlorococcus marinus (strain AS9601).